Here is a 298-residue protein sequence, read N- to C-terminus: Glutamyl-Q tRNA(Asp) synthetase (298 aa).

Residues arginine 9–serine 13 and glutamate 45 each bind L-glutamate. A 'HIGH' region motif is present at residues proline 12 to serine 22. Zn(2+)-binding residues include cysteine 101, cysteine 103, tyrosine 115, and cysteine 119. The L-glutamate site is built by tyrosine 172 and arginine 190. A 'KMSKS' region motif is present at residues lysine 228 to glutamine 232. Residue lysine 231 participates in ATP binding.

Belongs to the class-I aminoacyl-tRNA synthetase family. GluQ subfamily. It depends on Zn(2+) as a cofactor.

Functionally, catalyzes the tRNA-independent activation of glutamate in presence of ATP and the subsequent transfer of glutamate onto a tRNA(Asp). Glutamate is transferred on the 2-amino-5-(4,5-dihydroxy-2-cyclopenten-1-yl) moiety of the queuosine in the wobble position of the QUC anticodon. The protein is Glutamyl-Q tRNA(Asp) synthetase of Salmonella paratyphi A (strain ATCC 9150 / SARB42).